Reading from the N-terminus, the 500-residue chain is NAD(P)H-quinone oxidoreductase chain 4, chloroplastic (500 aa).

Helical transmembrane passes span 4-24 (FPWL…MLFL), 35-55 (YTIC…CYNF), 87-107 (IGTI…AFPV), 113-130 (LFHF…GSFS), 134-154 (LLLF…LLSM), 167-187 (FILY…GISL), 211-231 (IILY…IPLH), 242-262 (HYST…YGLV), 272-292 (AHSL…IYAA), 305-325 (IAYS…SITD), 330-350 (GAIL…FLAG), 386-406 (LALP…GIIT), 416-436 (IFII…LLSM), and 462-482 (LFLS…PDFV).

The protein belongs to the complex I subunit 4 family.

It is found in the plastid. The protein resides in the chloroplast thylakoid membrane. The catalysed reaction is a plastoquinone + NADH + (n+1) H(+)(in) = a plastoquinol + NAD(+) + n H(+)(out). It carries out the reaction a plastoquinone + NADPH + (n+1) H(+)(in) = a plastoquinol + NADP(+) + n H(+)(out). The sequence is that of NAD(P)H-quinone oxidoreductase chain 4, chloroplastic from Aethionema cordifolium (Lebanon stonecress).